Consider the following 362-residue polypeptide: 3-dehydroquinate synthase (362 aa).

Residues 71 to 76 (DGEQYK), 105 to 109 (GVVGD), 129 to 130 (TT), Lys-142, Lys-151, and 169 to 172 (CLKT) each bind NAD(+). Positions 184, 247, and 264 each coordinate Zn(2+).

This sequence belongs to the sugar phosphate cyclases superfamily. Dehydroquinate synthase family. NAD(+) serves as cofactor. Co(2+) is required as a cofactor. Requires Zn(2+) as cofactor.

The protein localises to the cytoplasm. It catalyses the reaction 7-phospho-2-dehydro-3-deoxy-D-arabino-heptonate = 3-dehydroquinate + phosphate. The protein operates within metabolic intermediate biosynthesis; chorismate biosynthesis; chorismate from D-erythrose 4-phosphate and phosphoenolpyruvate: step 2/7. In terms of biological role, catalyzes the conversion of 3-deoxy-D-arabino-heptulosonate 7-phosphate (DAHP) to dehydroquinate (DHQ). This chain is 3-dehydroquinate synthase, found in Escherichia coli O157:H7.